Here is a 164-residue protein sequence, read N- to C-terminus: UPF0304 protein Asuc_0543 (164 aa).

This sequence belongs to the UPF0304 family.

The protein is UPF0304 protein Asuc_0543 of Actinobacillus succinogenes (strain ATCC 55618 / DSM 22257 / CCUG 43843 / 130Z).